The chain runs to 408 residues: Neutral cholesterol ester hydrolase 1 (408 aa).

Residues 1–4 (MRSS) are Cytoplasmic-facing. A helical; Signal-anchor for type II membrane protein transmembrane segment spans residues 5 to 25 (CVLLTALLALAAYYIYIPLPS). Over 26 to 408 (SVSDPWKLML…SYIKWLDQNL (383 aa)) the chain is Lumenal. Positions 113–115 (HGG) match the Involved in the stabilization of the negatively charged intermediate by the formation of the oxyanion hole motif. Serine 191 is a catalytic residue. Residues asparagine 270 and asparagine 287 are each glycosylated (N-linked (GlcNAc...) asparagine). Active-site residues include aspartate 348 and histidine 378. N-linked (GlcNAc...) asparagine glycosylation is present at asparagine 389.

The protein belongs to the 'GDXG' lipolytic enzyme family. In terms of processing, N-glycosylated.

It is found in the cell membrane. The protein localises to the microsome. The catalysed reaction is a 1-O-alkyl-2-acetyl-sn-glycerol + H2O = a 1-O-alkyl-sn-glycerol + acetate + H(+). It carries out the reaction 1-O-hexadecyl-2-acetyl-sn-glycerol + H2O = 1-O-hexadecyl-sn-glycerol + acetate + H(+). The enzyme catalyses a cholesterol ester + H2O = cholesterol + a fatty acid + H(+). It catalyses the reaction cholesteryl (9Z-octadecenoate) + H2O = cholesterol + (9Z)-octadecenoate + H(+). In terms of biological role, hydrolyzes 2-acetyl monoalkylglycerol ether (1-O-alkyl-2-acetyl-sn-glycerol), the penultimate precursor of the pathway for de novo synthesis of platelet-activating factor. May be responsible for the hydrolysis of cholesterol esters (such as cholesteryl (9Z-octadecenoate)) in macrophages. Also involved in organ detoxification by hydrolyzing exogenous organophosphorus compounds. This Bos taurus (Bovine) protein is Neutral cholesterol ester hydrolase 1 (NCEH1).